Here is a 91-residue protein sequence, read N- to C-terminus: uncharacterized protein (91 aa).

This is an uncharacterized protein from Saccharolobus islandicus (Sulfolobus islandicus).